We begin with the raw amino-acid sequence, 267 residues long: Hydroxyethylthiazole kinase (267 aa).

Residue Met-46 participates in substrate binding. ATP is bound by residues Arg-122 and Ser-168. Residue Gly-195 participates in substrate binding.

It belongs to the Thz kinase family. Mg(2+) is required as a cofactor.

It carries out the reaction 5-(2-hydroxyethyl)-4-methylthiazole + ATP = 4-methyl-5-(2-phosphooxyethyl)-thiazole + ADP + H(+). It participates in cofactor biosynthesis; thiamine diphosphate biosynthesis; 4-methyl-5-(2-phosphoethyl)-thiazole from 5-(2-hydroxyethyl)-4-methylthiazole: step 1/1. In terms of biological role, catalyzes the phosphorylation of the hydroxyl group of 4-methyl-5-beta-hydroxyethylthiazole (THZ). This chain is Hydroxyethylthiazole kinase, found in Nitratidesulfovibrio vulgaris (strain DSM 19637 / Miyazaki F) (Desulfovibrio vulgaris).